The following is a 164-amino-acid chain: Neurotrophin-3 (164 aa).

A signal peptide spans 1–3; that stretch reads IQS. Residues 4-120 constitute a propeptide that is removed on maturation; the sequence is TNMDQQGSLT…ALNRTSRRKR (117 aa). N113 carries N-linked (GlcNAc...) asparagine glycosylation.

This sequence belongs to the NGF-beta family.

The protein resides in the secreted. Functionally, seems to promote the survival of visceral and proprioceptive sensory neurons. The protein is Neurotrophin-3 (NTF3) of Sanzinia madagascariensis (Madagascar tree boa).